The chain runs to 267 residues: MRRIAVMGAAGRMGKTLIEAVQQTQGAGLTAAIDRPDSSLVGADAGELAALGRIGVLLSDDLAKVADDFDVLIDFTHPSVTLKNLAFCRKHGKAMIIGTTGFTSEEKQLLAEAGKDIPIVFAANFSVGVNLSLKLLDMAARVLGDDVDIEIIEAHHRHKVDAPSGTALRMGEVVANALGRDLQEVAVYGREGQTGARDRQTIGFATVRAGDVVGDHTVLFAAEGERLEITHKASSRMTFAKGAVRAALWLDGREAGLYDMQDVLELR.

NAD(+) contacts are provided by residues 8–13 (GAAGRM) and Asp-34. Arg-35 provides a ligand contact to NADP(+). NAD(+) contacts are provided by residues 98 to 100 (GTT) and 122 to 125 (AANF). His-155 functions as the Proton donor/acceptor in the catalytic mechanism. His-156 contacts (S)-2,3,4,5-tetrahydrodipicolinate. Catalysis depends on Lys-159, which acts as the Proton donor. A (S)-2,3,4,5-tetrahydrodipicolinate-binding site is contributed by 165-166 (GT).

The protein belongs to the DapB family.

The protein resides in the cytoplasm. It catalyses the reaction (S)-2,3,4,5-tetrahydrodipicolinate + NAD(+) + H2O = (2S,4S)-4-hydroxy-2,3,4,5-tetrahydrodipicolinate + NADH + H(+). It carries out the reaction (S)-2,3,4,5-tetrahydrodipicolinate + NADP(+) + H2O = (2S,4S)-4-hydroxy-2,3,4,5-tetrahydrodipicolinate + NADPH + H(+). It participates in amino-acid biosynthesis; L-lysine biosynthesis via DAP pathway; (S)-tetrahydrodipicolinate from L-aspartate: step 4/4. Functionally, catalyzes the conversion of 4-hydroxy-tetrahydrodipicolinate (HTPA) to tetrahydrodipicolinate. This is 4-hydroxy-tetrahydrodipicolinate reductase from Pseudomonas putida (strain W619).